Consider the following 171-residue polypeptide: Ribosome maturation factor RimM (171 aa).

The PRC barrel domain occupies 96–168 (EDGFYDHELE…TATITPPEGL (73 aa)).

It belongs to the RimM family. Binds ribosomal protein uS19.

It localises to the cytoplasm. Functionally, an accessory protein needed during the final step in the assembly of 30S ribosomal subunit, possibly for assembly of the head region. Essential for efficient processing of 16S rRNA. May be needed both before and after RbfA during the maturation of 16S rRNA. It has affinity for free ribosomal 30S subunits but not for 70S ribosomes. In Corynebacterium glutamicum (strain R), this protein is Ribosome maturation factor RimM.